Reading from the N-terminus, the 421-residue chain is Gamma-glutamyl phosphate reductase (421 aa).

It belongs to the gamma-glutamyl phosphate reductase family.

Its subcellular location is the cytoplasm. The enzyme catalyses L-glutamate 5-semialdehyde + phosphate + NADP(+) = L-glutamyl 5-phosphate + NADPH + H(+). Its pathway is amino-acid biosynthesis; L-proline biosynthesis; L-glutamate 5-semialdehyde from L-glutamate: step 2/2. Its function is as follows. Catalyzes the NADPH-dependent reduction of L-glutamate 5-phosphate into L-glutamate 5-semialdehyde and phosphate. The product spontaneously undergoes cyclization to form 1-pyrroline-5-carboxylate. This chain is Gamma-glutamyl phosphate reductase, found in Dinoroseobacter shibae (strain DSM 16493 / NCIMB 14021 / DFL 12).